Reading from the N-terminus, the 430-residue chain is Gamma-glutamyl phosphate reductase (430 aa).

This sequence belongs to the gamma-glutamyl phosphate reductase family.

It is found in the cytoplasm. The enzyme catalyses L-glutamate 5-semialdehyde + phosphate + NADP(+) = L-glutamyl 5-phosphate + NADPH + H(+). It participates in amino-acid biosynthesis; L-proline biosynthesis; L-glutamate 5-semialdehyde from L-glutamate: step 2/2. Functionally, catalyzes the NADPH-dependent reduction of L-glutamate 5-phosphate into L-glutamate 5-semialdehyde and phosphate. The product spontaneously undergoes cyclization to form 1-pyrroline-5-carboxylate. The chain is Gamma-glutamyl phosphate reductase from Corynebacterium diphtheriae (strain ATCC 700971 / NCTC 13129 / Biotype gravis).